Reading from the N-terminus, the 276-residue chain is Diaminopimelate epimerase (276 aa).

Substrate-binding residues include Asn11, Gln44, and Asn64. Cys73 acts as the Proton donor in catalysis. Residues 74 to 75, Asn159, Asn192, and 210 to 211 each bind substrate; these read IN and ER. The Proton acceptor role is filled by Cys219. 220-221 is a binding site for substrate; the sequence is GS.

This sequence belongs to the diaminopimelate epimerase family. As to quaternary structure, homodimer.

The protein localises to the cytoplasm. The catalysed reaction is (2S,6S)-2,6-diaminopimelate = meso-2,6-diaminopimelate. The protein operates within amino-acid biosynthesis; L-lysine biosynthesis via DAP pathway; DL-2,6-diaminopimelate from LL-2,6-diaminopimelate: step 1/1. Catalyzes the stereoinversion of LL-2,6-diaminopimelate (L,L-DAP) to meso-diaminopimelate (meso-DAP), a precursor of L-lysine and an essential component of the bacterial peptidoglycan. The protein is Diaminopimelate epimerase of Wigglesworthia glossinidia brevipalpis.